The chain runs to 60 residues: Sec-independent protein translocase protein TatA (60 aa).

A helical membrane pass occupies residues 1 to 21; sequence MAGLGVTELLIILAIVIVLFG.

Belongs to the TatA/E family. As to quaternary structure, forms a complex with TatC.

The protein localises to the cell membrane. Functionally, part of the twin-arginine translocation (Tat) system that transports large folded proteins containing a characteristic twin-arginine motif in their signal peptide across membranes. TatA could form the protein-conducting channel of the Tat system. This is Sec-independent protein translocase protein TatA from Herpetosiphon aurantiacus (strain ATCC 23779 / DSM 785 / 114-95).